Reading from the N-terminus, the 651-residue chain is MSNESLANLLKEERRFAPPADLAANANVTAEAYEQAKADRLGFWAEQARRLTWAKEPTETLDWSNPPFAKWFKDGTLNVAYNCVDRHVEAGNGDRVAIHFEGESGDSRALTYAQLKDEVSKAANALLELGVQKGDRVAIYMPMIPETAIAMLACARIGAAHSVVFGGFSSDALATRIQDADARVVITADGGYRRGKPSALKPAVDEAVERAGIVEHVLVVRRTGQDVAWDDSRDKWWHETVDGQSAEHTPEAFDAEHPLFILYTSGTTGKPKGILHTSGGYLTQTAYTHWAVFDLKPETDVFWCTADVGWVTGHSYIVYGPLANGATQVMYEGTPDTPHQGRFWEIVQKYGVTILYTAPTAIRTFMKWGDDIPAKFDLSSLRVLGSVGEPINPEAWIWYRKNIGADATPVVDTWWQTETGAMMITPLPGVTHAKPGSAQRPLPGISATVVDDEANEVPNGGGGYLVLTEPWPSMLRTIWGDDQRFIDTYWSRFEGKYFAGDGAKKDDDGDIWLLGRVDDVMLVSGHNISTTEVESALVSHPSVAEAAVVGATDETTGQAIVAFVILRGTTAESEDLVAELRNHVGATLGPIAKPKRILPVSELPKTRSGKIMRRLLRDVAENRQVGDVTTLADSTVMDLIQTKLPAAPSED.

Residues 193–196 and threonine 312 each bind CoA; that span reads RRGK. Residues 388–390, 412–417, aspartate 501, and arginine 516 each bind ATP; these read GEP and DTWWQT. Serine 524 serves as a coordination point for CoA. Positions 538, 540, and 543 each coordinate Mg(2+). Lysine 610 bears the N6-acetyllysine mark.

It belongs to the ATP-dependent AMP-binding enzyme family. It depends on Mg(2+) as a cofactor. Acetylated. Deacetylation by the SIR2-homolog deacetylase activates the enzyme.

The catalysed reaction is acetate + ATP + CoA = acetyl-CoA + AMP + diphosphate. Its function is as follows. Catalyzes the conversion of acetate into acetyl-CoA (AcCoA), an essential intermediate at the junction of anabolic and catabolic pathways. AcsA undergoes a two-step reaction. In the first half reaction, AcsA combines acetate with ATP to form acetyl-adenylate (AcAMP) intermediate. In the second half reaction, it can then transfer the acetyl group from AcAMP to the sulfhydryl group of CoA, forming the product AcCoA. The chain is Acetyl-coenzyme A synthetase from Streptomyces coelicolor (strain ATCC BAA-471 / A3(2) / M145).